A 299-amino-acid polypeptide reads, in one-letter code: Tyrosine recombinase XerC (299 aa).

The 85-residue stretch at 1–85 folds into the Core-binding (CB) domain; that stretch reads MQADLDAFLD…ALRGFYRYLL (85 aa). One can recognise a Tyr recombinase domain in the interval 106-285; that stretch reads RLPRTLDADR…DFQHLAAVYD (180 aa). Catalysis depends on residues Arg-146, Lys-170, His-237, Arg-240, and His-263. Tyr-272 functions as the O-(3'-phospho-DNA)-tyrosine intermediate in the catalytic mechanism.

This sequence belongs to the 'phage' integrase family. XerC subfamily. In terms of assembly, forms a cyclic heterotetrameric complex composed of two molecules of XerC and two molecules of XerD.

It localises to the cytoplasm. In terms of biological role, site-specific tyrosine recombinase, which acts by catalyzing the cutting and rejoining of the recombining DNA molecules. The XerC-XerD complex is essential to convert dimers of the bacterial chromosome into monomers to permit their segregation at cell division. It also contributes to the segregational stability of plasmids. The sequence is that of Tyrosine recombinase XerC from Azotobacter vinelandii (strain DJ / ATCC BAA-1303).